A 230-amino-acid chain; its full sequence is MSSANTTVVTTTVRNATPSLALDAGTIERFLAHSHRRRYPTRTDVFRPGDPAGTLYYVISGSVSIIAEEDDDRELVLGYFGSGEFVGEMGLFIESDTREVILRTRTQCELAEISYERLQQLFQTSLSPDAPKILYAIGVQLSKRLLDTTRKASRLAFLDVTDRIVRTLHDLSKEPEAMSHPQGTQLRVSRQELARLVGCSREMAGRVLKKLQADGLLHARGKTVVLYGTR.

Residue 18-139 participates in a nucleoside 3',5'-cyclic phosphate binding; that stretch reads PSLALDAGTI…APKILYAIGV (122 aa). The HTH crp-type domain occupies 158 to 230; it reads LDVTDRIVRT…GKTVVLYGTR (73 aa). Positions 190–209 form a DNA-binding region, H-T-H motif; the sequence is RQELARLVGCSREMAGRVLK.

As to quaternary structure, homodimer.

The protein resides in the cytoplasm. Its activity is regulated as follows. Allosterically inhibited by cyclic di-GMP (c-di-GMP), which binds to Clp and abolishes its ability to bind its target gene promoter. Functionally, global transcriptional regulator that regulates virulence factors production by activating or repressing the expression of a large set of genes in diffusible signal factor (DSF) pathway. In Xanthomonas oryzae pv. oryzae (strain MAFF 311018), this protein is CRP-like protein Clp (clp).